The chain runs to 248 residues: Probable transcriptional regulatory protein RPE_4771 (248 aa).

The segment at 1-21 (MAGHSQFKNIMHRKGRQDAQK) is disordered.

The protein belongs to the TACO1 family.

It is found in the cytoplasm. This Rhodopseudomonas palustris (strain BisA53) protein is Probable transcriptional regulatory protein RPE_4771.